The chain runs to 540 residues: MTLTNLDAIVVGAGFSGILAVYRLRKLGFRVQGFERQERLGGVWRENAYPGAAVDSLFPFYQFYDAELLQDWEWGEQFPTRAEMLRYFDHVDKRWEISASFEFGVSVSAARYSETTQRWTVTLEDGRRAEARWFIPAVGFSSVLNIPRIPGMSRFRGAIYHTAKWPHDAVSMRGKRVAVIGTGPSGVQIIQSVGKIAKAMTIFQQSPCLTLRKYGSPNQTATALCMRPDDHREALRLGLQTSNGFGYVPRDQDTLDVPIEERNHFYQQRYLAGGWAFWMAGFRDLCQNIQANRDAYDFWARRTRARIGDVTKRELLVPQIPSFAFGIKRPCLEEDLYEIMDQPHVKIIDISNQQIELITETSIRVHGQTVECEAIIFATGFGDEASGLRSLHIRGRNGIRLEDAWSDGVESHLGMAIHSFPNMFFLYGPQCPTLLVNSPAVITVQVEWLCEIISKCQQAGICQLEATSKSHCQWEKKMSLLWDKTLYHTHARKSKKTAEANKEEKTWVGGLILYRRELENCLANNLEGFQAWYVEETALL.

FAD contacts are provided by residues 43 to 46 and 55 to 58; these read VWRE and DSLF. Residues 53–55, 182–188, and 205–206 each bind NADP(+); these read AVD, TGPSGVQ, and QS.

It belongs to the FAD-binding monooxygenase family. FAD serves as cofactor.

Its pathway is alkaloid biosynthesis. Functionally, FAD-binding monooxygenase; part of the gene cluster that mediates the biosynthesis of loline alkaloids, potent insecticidal agents composed of a pyrrolizidine ring system and an uncommon ether bridge linking carbons 2 and 7. Lolines are structurally differentiated by the various modifications of the L-amino group and include norloline, loline, N-methylloline, N-acetylloline, N-acetylnorloline, and N-formylloline. The first committed step is the condensation of O-acetyl-L-homoserine (derived from L-aspartic acid) and L-proline, probably catalyzed by the gamma-type pyridoxal 5'-phosphate(PLP)-dependent enzyme lolC, to give the diamino diacid, NACPP. Ensuing cyclization, decarboxylation, and acetylation steps yield 1-exo-acetamidopyrrolizidine (AcAP). LolO is required for installation of the ether bridge upon the pathway intermediate, 1-exo-acetamidopyrrolizidine (AcAP). In sequential 2-oxoglutarate- and O(2)-consuming steps, lolO removes hydrogens from C2 and C7 of AcAP to form both carbon-oxygen bonds in N-acetylnorloline (NANL), the precursor to all other lolines. The enzymes lolD, lolE, lolF and lolT have also been proposed to be involved in the ether-bridge installation. Further processing of the exocyclic moiety of NANL by fungal N-acetamidase (LolN), methyltransferase (LolM), and cytochrome P450 (LolP) enzymes, with occasional involvement of a plant acetyltransferase, generates the other known lolines. LolN transforms NANL to norlonine which is monomethylated and dimethylated to respectively lonine and N-methyllonine (NML) by lolM. LolP catalyzes hydroxylation of the methyl group in N-methylloline (NML) and further oxygenation to N-formylloline (NFL). A plant acetyltransferase is responsible for the acetylation of loline to form N-acetylloline (NAL). LolA might interact with aspartate kinase to prevent feedback inhibition of its activity by these end products and thereby promote production of l-homoserine from l-aspartate. This Epichloe uncinata (Endophyte fungus) protein is FAD-binding monooxygenase lolF2.